Consider the following 185-residue polypeptide: Prenylated Rab acceptor protein 1 (185 aa).

The Cytoplasmic segment spans residues 1 to 78 (MAAQKDQQKD…RNVEYYQSNY (78 aa)). Positions 30–54 (AGREWLERRRATIRPWGTFVDQQRF) are required for interaction with prenylated RAB3A and VAMP2. Transmembrane regions (helical) follow at residues 79-94 (VFVFLGLILYCVVTSP) and 95-112 (MLLVALAVFFGACYILYL). At 113 to 131 (RTLQSKLVLFGREVSPAHQ) the chain is on the cytoplasmic side. The next 2 membrane-spanning stretches (helical) occupy residues 132-148 (YALAGGVSFPFFWLAGA) and 149-165 (GSAVFWVLGATLVLIGS). Residues 165–185 (SHAAFHQMEPADGEELQMEPV) form a required for interaction with GDI1 region. The Cytoplasmic segment spans residues 166 to 185 (HAAFHQMEPADGEELQMEPV). The tract at residues 175–185 (ADGEELQMEPV) is required for interaction with prenylated RAB3A and VAMP2. A homodimerization region spans residues 175–185 (ADGEELQMEPV).

This sequence belongs to the PRA1 family. Homodimer. Interacts with VAMP2 (synaptobrevin-2), GDI1, NRDG1 and PCLO. Interacts with prenylated Rab proteins (including RAB5 and RAB6), and with the members of the Ras superfamily HRAS, RHOA, TC21, and RAP1A.

It is found in the cell membrane. Its subcellular location is the cytoplasm. The protein localises to the golgi apparatus. The protein resides in the cytoplasmic vesicle. It localises to the secretory vesicle. It is found in the synaptic vesicle. In terms of biological role, general Rab protein regulator required for vesicle formation from the Golgi complex. May control vesicle docking and fusion by mediating the action of Rab GTPases to the SNARE complexes. In addition it inhibits the removal of Rab GTPases from the membrane by GDI1. In Mus musculus (Mouse), this protein is Prenylated Rab acceptor protein 1 (Rabac1).